Here is a 211-residue protein sequence, read N- to C-terminus: Ribosomal RNA small subunit methyltransferase G (211 aa).

Residues Gly-73, 126–127, and Arg-142 each bind S-adenosyl-L-methionine; that span reads IE.

Belongs to the methyltransferase superfamily. RNA methyltransferase RsmG family.

The protein resides in the cytoplasm. It catalyses the reaction guanosine(527) in 16S rRNA + S-adenosyl-L-methionine = N(7)-methylguanosine(527) in 16S rRNA + S-adenosyl-L-homocysteine. Its function is as follows. Specifically methylates the N7 position of guanine in position 527 of 16S rRNA. The protein is Ribosomal RNA small subunit methyltransferase G of Methylorubrum populi (strain ATCC BAA-705 / NCIMB 13946 / BJ001) (Methylobacterium populi).